The primary structure comprises 336 residues: Ephrin-B2 (336 aa).

The N-terminal stretch at 1–28 (MAMARSRRDSVWKYCWGLLMVLCRTAIS) is a signal peptide. Residues 29 to 232 (RSIVLEPIYW…LLGSEVALFA (204 aa)) lie on the Extracellular side of the membrane. An Ephrin RBD domain is found at 31–167 (IVLEPIYWNS…TRAMKILMKV (137 aa)). The N-linked (GlcNAc...) asparagine glycan is linked to Asn-39. 2 cysteine pairs are disulfide-bonded: Cys-65/Cys-104 and Cys-92/Cys-156. A glycan (N-linked (GlcNAc...) asparagine) is linked at Asn-142. The disordered stretch occupies residues 170–216 (DASSAGSARNHGPTRRPELEAGTNGRSSTTSPFVKPNPGSSTDGNSA). Residues 193 to 216 (NGRSSTTSPFVKPNPGSSTDGNSA) are compositionally biased toward polar residues. The helical transmembrane segment at 233-253 (GIASGCIIFIVIIITLVVLLL) threads the bilayer. Residues 254-336 (KYRRRHRKHS…QSPANIYYKV (83 aa)) lie on the Cytoplasmic side of the membrane. Ser-263 carries the phosphoserine modification. Thr-277 bears the Phosphothreonine mark. At Arg-280 the chain carries Omega-N-methylarginine. Positions 334-336 (YKV) match the PDZ-binding motif.

Belongs to the ephrin family. As to quaternary structure, interacts with PDZRN3. Binds to the ephrin receptor EPHA3, EPHA4 and EPHB4. Post-translationally, inducible phosphorylation of tyrosine residues in the cytoplasmic domain. In terms of tissue distribution, expressed in inner and outer pillar cells of the organ of Corti (at protein level). Expressed on lateral floor plate cells, specifically on commissural axon segments that have passed through the floor plate. Expressed in cells of the retinal ganglion cell layer during retinal axon guidance to the optic disk. Expressed in myogenic progenitor cells.

It is found in the cell membrane. Its subcellular location is the cell junction. The protein localises to the adherens junction. In terms of biological role, cell surface transmembrane ligand for Eph receptors, a family of receptor tyrosine kinases which are crucial for migration, repulsion and adhesion during neuronal, vascular and epithelial development. Binds promiscuously Eph receptors residing on adjacent cells, leading to contact-dependent bidirectional signaling into neighboring cells. The signaling pathway downstream of the receptor is referred to as forward signaling while the signaling pathway downstream of the ephrin ligand is referred to as reverse signaling. Binds to receptor tyrosine kinase including EPHA4, EPHA3 and EPHB4. Together with EPHB4 plays a central role in heart morphogenesis and angiogenesis through regulation of cell adhesion and cell migration. EPHB4-mediated forward signaling controls cellular repulsion and segregation from EFNB2-expressing cells. May play a role in constraining the orientation of longitudinally projecting axons. In Mus musculus (Mouse), this protein is Ephrin-B2 (Efnb2).